A 92-amino-acid chain; its full sequence is MKRNLIKVVKMKSYFAALMLSVSVLPAYAGPLGTADKADLPQSNVSSPMMAQSLRQPDLQPISTDRKTECFRLYTPDRKPGVNYVPDGSTGH.

Positions 1–29 (MKRNLIKVVKMKSYFAALMLSVSVLPAYA) are cleaved as a signal peptide. Residues 36–62 (DKADLPQSNVSSPMMAQSLRQPDLQPI) are disordered. Polar residues predominate over residues 41 to 55 (PQSNVSSPMMAQSLR).

Belongs to the YjbT family.

This is an uncharacterized protein from Escherichia coli O1:K1 / APEC.